The following is a 387-amino-acid chain: 8-amino-7-oxononanoate synthase (387 aa).

Pyridoxal 5'-phosphate is bound at residue 109 to 110 (GY). His-134 lines the substrate pocket. Pyridoxal 5'-phosphate-binding residues include Ser-182, His-214, and Thr-242. N6-(pyridoxal phosphate)lysine is present on Lys-245. Residue Thr-359 participates in substrate binding.

This sequence belongs to the class-II pyridoxal-phosphate-dependent aminotransferase family. BioF subfamily. Homodimer. Pyridoxal 5'-phosphate is required as a cofactor.

It carries out the reaction 6-carboxyhexanoyl-[ACP] + L-alanine + H(+) = (8S)-8-amino-7-oxononanoate + holo-[ACP] + CO2. It participates in cofactor biosynthesis; biotin biosynthesis. In terms of biological role, catalyzes the decarboxylative condensation of pimeloyl-[acyl-carrier protein] and L-alanine to produce 8-amino-7-oxononanoate (AON), [acyl-carrier protein], and carbon dioxide. The chain is 8-amino-7-oxononanoate synthase from Haemophilus ducreyi (strain 35000HP / ATCC 700724).